We begin with the raw amino-acid sequence, 231 residues long: Large ribosomal subunit protein uL1 (231 aa).

The protein belongs to the universal ribosomal protein uL1 family. Part of the 50S ribosomal subunit.

In terms of biological role, binds directly to 23S rRNA. The L1 stalk is quite mobile in the ribosome, and is involved in E site tRNA release. Protein L1 is also a translational repressor protein, it controls the translation of the L11 operon by binding to its mRNA. The sequence is that of Large ribosomal subunit protein uL1 from Acetivibrio thermocellus (strain ATCC 27405 / DSM 1237 / JCM 9322 / NBRC 103400 / NCIMB 10682 / NRRL B-4536 / VPI 7372) (Clostridium thermocellum).